The sequence spans 336 residues: MIEADRLISADAIPEEEFLDRAMRPKLLNEYVGQPQVREQMEIFIQAARKRGDALDHLLIFGPPGLGKTTLANIVANEMGVNMRTTSGPVLEKAGDLAALLTNLEPHDVLFIDEIHRLSPVVEEVLYPAMEDYQLDIMIGEGPAARSIKLDLPPFTLIGATTRAGSLTSPLRDRFGIVQRLEFYNVADLQYIVGRSAQCLGLDLTPEGSLEVARRARGTPRIANRLLRRVRDFSEVKSEGAITGVVATQALDMLAVDTEGFDYMDRKLLLAIIDKFMGGPVGLDNLAAAIGEERETIEDVLEPFLIQQGFIQRTPRGRMATQHAYRHFGLTREDLG.

The segment at 4 to 184 (ADRLISADAI…FGIVQRLEFY (181 aa)) is large ATPase domain (RuvB-L). ATP-binding positions include R24, G65, K68, T69, T70, 131 to 133 (EDY), R174, Y184, and R221. Position 69 (T69) interacts with Mg(2+). A small ATPAse domain (RuvB-S) region spans residues 185–255 (NVADLQYIVG…VATQALDMLA (71 aa)). A head domain (RuvB-H) region spans residues 258 to 336 (TEGFDYMDRK…HFGLTREDLG (79 aa)). Positions 294, 313, and 318 each coordinate DNA.

The protein belongs to the RuvB family. As to quaternary structure, homohexamer. Forms an RuvA(8)-RuvB(12)-Holliday junction (HJ) complex. HJ DNA is sandwiched between 2 RuvA tetramers; dsDNA enters through RuvA and exits via RuvB. An RuvB hexamer assembles on each DNA strand where it exits the tetramer. Each RuvB hexamer is contacted by two RuvA subunits (via domain III) on 2 adjacent RuvB subunits; this complex drives branch migration. In the full resolvosome a probable DNA-RuvA(4)-RuvB(12)-RuvC(2) complex forms which resolves the HJ.

It is found in the cytoplasm. It carries out the reaction ATP + H2O = ADP + phosphate + H(+). Its function is as follows. The RuvA-RuvB-RuvC complex processes Holliday junction (HJ) DNA during genetic recombination and DNA repair, while the RuvA-RuvB complex plays an important role in the rescue of blocked DNA replication forks via replication fork reversal (RFR). RuvA specifically binds to HJ cruciform DNA, conferring on it an open structure. The RuvB hexamer acts as an ATP-dependent pump, pulling dsDNA into and through the RuvAB complex. RuvB forms 2 homohexamers on either side of HJ DNA bound by 1 or 2 RuvA tetramers; 4 subunits per hexamer contact DNA at a time. Coordinated motions by a converter formed by DNA-disengaged RuvB subunits stimulates ATP hydrolysis and nucleotide exchange. Immobilization of the converter enables RuvB to convert the ATP-contained energy into a lever motion, pulling 2 nucleotides of DNA out of the RuvA tetramer per ATP hydrolyzed, thus driving DNA branch migration. The RuvB motors rotate together with the DNA substrate, which together with the progressing nucleotide cycle form the mechanistic basis for DNA recombination by continuous HJ branch migration. Branch migration allows RuvC to scan DNA until it finds its consensus sequence, where it cleaves and resolves cruciform DNA. This Pectobacterium carotovorum subsp. carotovorum (strain PC1) protein is Holliday junction branch migration complex subunit RuvB.